The sequence spans 309 residues: uncharacterized protein (309 aa).

The HTH lysR-type domain occupies 1–60; the sequence is MKPLLDVLMILDALEKEGSFAAASAKLYKTPSALSYTVHKLESDLNIQLLDRSGHRAKFT. Positions 20 to 39 form a DNA-binding region, H-T-H motif; sequence FAAASAKLYKTPSALSYTVH.

It belongs to the LysR transcriptional regulatory family.

This is an uncharacterized protein from Escherichia coli (strain K12).